The chain runs to 278 residues: Large ribosomal subunit protein uL2 (278 aa).

Positions 226-278 (MNPIDHPHGGGEGKTAAGRHPVSPWGTPSKGSRTRKNKRTSNMIVRSRYSKKG) are disordered.

The protein belongs to the universal ribosomal protein uL2 family. Part of the 50S ribosomal subunit. Forms a bridge to the 30S subunit in the 70S ribosome.

In terms of biological role, one of the primary rRNA binding proteins. Required for association of the 30S and 50S subunits to form the 70S ribosome, for tRNA binding and peptide bond formation. It has been suggested to have peptidyltransferase activity; this is somewhat controversial. Makes several contacts with the 16S rRNA in the 70S ribosome. The chain is Large ribosomal subunit protein uL2 from Nitrosomonas europaea (strain ATCC 19718 / CIP 103999 / KCTC 2705 / NBRC 14298).